A 135-amino-acid polypeptide reads, in one-letter code: Putative pre-16S rRNA nuclease (135 aa).

This sequence belongs to the YqgF nuclease family.

The protein localises to the cytoplasm. Could be a nuclease involved in processing of the 5'-end of pre-16S rRNA. The protein is Putative pre-16S rRNA nuclease of Clostridium acetobutylicum (strain ATCC 824 / DSM 792 / JCM 1419 / IAM 19013 / LMG 5710 / NBRC 13948 / NRRL B-527 / VKM B-1787 / 2291 / W).